A 124-amino-acid chain; its full sequence is MNLEYVQVVQKFNQVLLELTKKVCTVVGGSKPTYWYHHIRRVCSECPSMPMSMIGPYLNVYKAQILTRDKNFFMNFDPAHNEYTFIIQKLKEAARNMPEDELEQYWVKLLFLLKSYIKCKPFIN.

Belongs to the asfivirus H124R family.

It localises to the virion. This is an uncharacterized protein from Ornithodoros (relapsing fever ticks).